Here is a 349-residue protein sequence, read N- to C-terminus: Beta-glucanase (349 aa).

Positions 1-27 are cleaved as a signal peptide; that stretch reads MNIKKTAVKSALAVAAAAAALTTNVSA. The GH16 domain occupies 28–197; sequence KDFSGAELYT…WVKVYKYTPG (170 aa). Glutamate 79 functions as the Nucleophile in the catalytic mechanism. Catalysis depends on glutamate 83, which acts as the Proton donor. The tract at residues 258 to 311 is disordered; sequence SFNGQVPRDDEPAPQSSSSAPASSSSVPASSSSVPASSSSAFVPPSSSSATNAI. Over residues 270–307 the composition is skewed to low complexity; it reads APQSSSSAPASSSSVPASSSSVPASSSSAFVPPSSSSA. 5 repeat units span residues 271 to 277, 278 to 284, 285 to 291, 292 to 298, and 301 to 307. Positions 271–307 are 5 X 7 AA tandem repeats of P-X-S-S-S-S-X; sequence PQSSSSAPASSSSVPASSSSVPASSSSAFVPPSSSSA.

It belongs to the glycosyl hydrolase 16 family.

It carries out the reaction Hydrolysis of (1-&gt;4)-beta-D-glucosidic linkages in beta-D-glucans containing (1-&gt;3)- and (1-&gt;4)-bonds.. This Fibrobacter succinogenes (strain ATCC 19169 / S85) protein is Beta-glucanase.